The sequence spans 1398 residues: DNA-directed RNA polymerase subunit beta' (1398 aa).

4 residues coordinate Zn(2+): Cys-71, Cys-73, Cys-86, and Cys-89. The Mg(2+) site is built by Asp-462, Asp-464, and Asp-466. Zn(2+) contacts are provided by Cys-810, Cys-883, Cys-890, and Cys-893. The disordered stretch occupies residues 1377–1398 (EKQAAVVSPAPEAELPALPPAE). Positions 1380–1392 (AAVVSPAPEAELP) are enriched in low complexity.

It belongs to the RNA polymerase beta' chain family. The RNAP catalytic core consists of 2 alpha, 1 beta, 1 beta' and 1 omega subunit. When a sigma factor is associated with the core the holoenzyme is formed, which can initiate transcription. Mg(2+) serves as cofactor. The cofactor is Zn(2+).

It catalyses the reaction RNA(n) + a ribonucleoside 5'-triphosphate = RNA(n+1) + diphosphate. In terms of biological role, DNA-dependent RNA polymerase catalyzes the transcription of DNA into RNA using the four ribonucleoside triphosphates as substrates. The sequence is that of DNA-directed RNA polymerase subunit beta' from Bradyrhizobium diazoefficiens (strain JCM 10833 / BCRC 13528 / IAM 13628 / NBRC 14792 / USDA 110).